The following is a 398-amino-acid chain: Type II secretion system protein L (398 aa).

Topologically, residues 1–248 (MNNHHTSSAA…RQPTPRRWRP (248 aa)) are cytoplasmic. A helical transmembrane segment spans residues 249-265 (VIVAALALLLLWSSNCL). Over 266–398 (HDHLMLGQQA…GRLTLEGNDA (133 aa)) the chain is Periplasmic.

Belongs to the GSP L family. Type II secretion system is composed of four main components: the outer membrane complex, the inner membrane complex, the cytoplasmic secretion ATPase and the periplasm-spanning pseudopilus. Forms homodimers. Interacts with PulM/GspM. Interacts with PulE/GspE and PulF/GspF.

The protein resides in the cell inner membrane. In terms of biological role, inner membrane component of the type II secretion system required for the energy-dependent secretion of extracellular factors such as proteases and toxins from the periplasm. Plays a role in the complex assembly and recruits PulM resulting in a stable complex in the inner membrane. Provides thus a link between the energy-providing PulE protein in the cytoplasm and the rest of the T2SS machinery. In Klebsiella pneumoniae, this protein is Type II secretion system protein L (pulL).